Reading from the N-terminus, the 202-residue chain is LexA repressor (202 aa).

A DNA-binding region (H-T-H motif) is located at residues 28–48 (RAEIAMRLGFRSPNAAEEHLK). Active-site for autocatalytic cleavage activity residues include Ser119 and Lys156.

The protein belongs to the peptidase S24 family. In terms of assembly, homodimer.

It catalyses the reaction Hydrolysis of Ala-|-Gly bond in repressor LexA.. In terms of biological role, represses a number of genes involved in the response to DNA damage (SOS response), including recA and lexA. Binds to the 16 bp palindromic sequence 5'-CTGTATATATATACAG-3'. In the presence of single-stranded DNA, RecA interacts with LexA causing an autocatalytic cleavage which disrupts the DNA-binding part of LexA, leading to derepression of the SOS regulon and eventually DNA repair. In Serratia proteamaculans (strain 568), this protein is LexA repressor.